The sequence spans 89 residues: Signal recognition particle 19 kDa protein (89 aa).

Belongs to the SRP19 family. Part of the signal recognition particle protein translocation system, which is composed of SRP and FtsY. Archaeal SRP consists of a 7S RNA molecule of 300 nucleotides and two protein subunits: SRP54 and SRP19.

Its subcellular location is the cytoplasm. Involved in targeting and insertion of nascent membrane proteins into the cytoplasmic membrane. Binds directly to 7S RNA and mediates binding of the 54 kDa subunit of the SRP. The chain is Signal recognition particle 19 kDa protein from Methanococcus maripaludis (strain DSM 14266 / JCM 13030 / NBRC 101832 / S2 / LL).